The sequence spans 460 residues: tRNA (guanine(10)-N(2))-methyltransferase TRMT11 (460 aa).

Residue Ala2 is modified to N-acetylalanine.

The protein belongs to the class I-like SAM-binding methyltransferase superfamily. TRM11 methyltransferase family. As to quaternary structure, part of the heterodimeric TRMT11-TRM112 methyltransferase complex; this complex forms an active tRNA methyltransferase, where TRMT112 acts as an activator of the catalytic subunit TRMT11.

It localises to the cytoplasm. It catalyses the reaction guanosine(10) in tRNA + S-adenosyl-L-methionine = N(2)-methylguanosine(10) in tRNA + S-adenosyl-L-homocysteine + H(+). Functionally, catalytic subunit of the TRMT11-TRM112 methyltransferase complex, that specifically mediates the S-adenosyl-L-methionine-dependent N(2)-methylation of guanosine nucleotide at position 10 (m2G10) in tRNAs. This is one of the major tRNA (guanine-N(2))-methyltransferases. This is tRNA (guanine(10)-N(2))-methyltransferase TRMT11 from Bos taurus (Bovine).